We begin with the raw amino-acid sequence, 103 residues long: Cell division suppressor protein YneA (103 aa).

The LysM domain occupies 36–87 (VKIEVQEGDTLWELADRIKGGKTADKHKFIEWVADKNNLPTSVIKPGDVLIL).

The protein belongs to the YneA family.

The protein localises to the cytoplasm. Functionally, inhibits cell division during the SOS response. Affects a later stage of the cell division protein assembly, after the assembly of the Z ring, by probably suppressing recruitment of FtsL and/or DivIC to the division machinery. The sequence is that of Cell division suppressor protein YneA from Bacillus licheniformis (strain ATCC 14580 / DSM 13 / JCM 2505 / CCUG 7422 / NBRC 12200 / NCIMB 9375 / NCTC 10341 / NRRL NRS-1264 / Gibson 46).